The primary structure comprises 75 residues: ATP synthase subunit c (75 aa).

Transmembrane regions (helical) follow at residues 9 to 29 (IGAG…GIIF) and 54 to 74 (FALA…ILFA).

Belongs to the ATPase C chain family. As to quaternary structure, F-type ATPases have 2 components, F(1) - the catalytic core - and F(0) - the membrane proton channel. F(1) has five subunits: alpha(3), beta(3), gamma(1), delta(1), epsilon(1). F(0) has three main subunits: a(1), b(2) and c(10-14). The alpha and beta chains form an alternating ring which encloses part of the gamma chain. F(1) is attached to F(0) by a central stalk formed by the gamma and epsilon chains, while a peripheral stalk is formed by the delta and b chains.

The protein resides in the cell inner membrane. In terms of biological role, f(1)F(0) ATP synthase produces ATP from ADP in the presence of a proton or sodium gradient. F-type ATPases consist of two structural domains, F(1) containing the extramembraneous catalytic core and F(0) containing the membrane proton channel, linked together by a central stalk and a peripheral stalk. During catalysis, ATP synthesis in the catalytic domain of F(1) is coupled via a rotary mechanism of the central stalk subunits to proton translocation. Key component of the F(0) channel; it plays a direct role in translocation across the membrane. A homomeric c-ring of between 10-14 subunits forms the central stalk rotor element with the F(1) delta and epsilon subunits. In Pelagibacter ubique (strain HTCC1062), this protein is ATP synthase subunit c.